The sequence spans 152 residues: Dimethylsulfoniopropionate lyase DddW (152 aa).

In terms of domain architecture, Cupin type-2 spans 69-124; it reads IAEFGPGHQLRPHRHTPPEFYLGLEGSGIVTIDGVPHEIRAGVALYIPGDAEHGTV. Fe cation is bound by residues H83, E87, Y89, and H121.

It belongs to the non-heme iron-dependent dioxygenase family. Homodimer. The cofactor is Fe(2+).

It catalyses the reaction S,S-dimethyl-beta-propiothetin = acrylate + dimethyl sulfide + H(+). Able to cleave dimethylsulfoniopropionate (DMSP), releasing dimethyl sulfide (DMS) and acrylate. DMS is the principal form by which sulfur is transported from oceans to the atmosphere. This chain is Dimethylsulfoniopropionate lyase DddW, found in Ruegeria pomeroyi (strain ATCC 700808 / DSM 15171 / DSS-3) (Silicibacter pomeroyi).